A 349-amino-acid polypeptide reads, in one-letter code: Septin-2 (349 aa).

The 273-residue stretch at 33–305 folds into the Septin-type G domain; the sequence is KGFEFTLMVV…ENFRSERLKR (273 aa). A G1 motif region spans residues 43 to 50; that stretch reads GESGLGKS. Residues 43 to 50, threonine 77, glycine 103, 182 to 190, glycine 240, and arginine 255 contribute to the GTP site; these read GESGLGKS and KADTLTLKE. The segment at 100-103 is G3 motif; the sequence is DTPG. The interval 181 to 184 is G4 motif; that stretch reads AKAD. An important for dimerization region spans residues 259–269; that stretch reads WGVVEVENPEH.

The protein belongs to the TRAFAC class TrmE-Era-EngA-EngB-Septin-like GTPase superfamily. Septin GTPase family. In terms of assembly, septins polymerize into heterooligomeric protein complexes that form filaments, and associate with cellular membranes, actin filaments and microtubules. GTPase activity is required for filament formation. Can form heterooligomers with other family members and form filaments.

The protein resides in the cytoplasm. The protein localises to the cytoskeleton. It is found in the spindle. It localises to the cleavage furrow. Its subcellular location is the midbody. The protein resides in the cell cortex. The protein localises to the cell projection. It is found in the cilium membrane. In terms of biological role, filament-forming cytoskeletal GTPase. Required for normal organization of the actin cytoskeleton. Plays a role in the biogenesis of polarized columnar-shaped epithelium by maintaining polyglutamylated microtubules, thus facilitating efficient vesicle transport, and by impeding MAP4 binding to tubulin. Required for the progression through mitosis. Forms a scaffold at the midplane of the mitotic splindle required to maintain CENPE localization at kinetochores and consequently chromosome congression. During anaphase, may be required for chromosome segregation and spindle elongation. Plays a role in ciliogenesis and collective cell movements. In cilia, required for the integrity of the diffusion barrier at the base of the primary cilium that prevents diffusion of transmembrane proteins between the cilia and plasma membranes. In Gallus gallus (Chicken), this protein is Septin-2.